The chain runs to 37 residues: GILSLVKGVAKLAGKGLAKEGGKFGLELIACKIAKQC.

Cysteine 31 and cysteine 37 form a disulfide bridge.

Belongs to the frog skin active peptide (FSAP) family. Esculentin subfamily. In terms of tissue distribution, expressed by the skin glands.

Its subcellular location is the secreted. In terms of biological role, shows antibacterial activity against representative Gram-negative and Gram-positive bacterial species, and hemolytic activity. The protein is Esculentin-2A of Pelophylax lessonae (Pool frog).